Consider the following 1097-residue polypeptide: DNA-directed RNA polymerase subunit beta (1097 aa).

Positions 1072–1097 are disordered; that stretch reads QDVNPRRSTPSRPTYESLGVADYDED.

It belongs to the RNA polymerase beta chain family. In cyanobacteria the RNAP catalytic core is composed of 2 alpha, 1 beta, 1 beta', 1 gamma and 1 omega subunit. When a sigma factor is associated with the core the holoenzyme is formed, which can initiate transcription.

It catalyses the reaction RNA(n) + a ribonucleoside 5'-triphosphate = RNA(n+1) + diphosphate. DNA-dependent RNA polymerase catalyzes the transcription of DNA into RNA using the four ribonucleoside triphosphates as substrates. This is DNA-directed RNA polymerase subunit beta from Synechococcus sp. (strain CC9605).